We begin with the raw amino-acid sequence, 373 residues long: Enoyl-[acyl-carrier-protein] reductase, mitochondrial (373 aa).

The transit peptide at 1-53 (MLVSQRVTGARARAPQLAGLLEAWYRHGRTTSSYSALSEPSRVRALVYGNHGD) directs the protein to the mitochondrion. Lys61 carries the N6-acetyllysine; alternate modification. Lys61 carries the N6-succinyllysine; alternate modification. Tyr94 serves as the catalytic Proton donor. NADP(+) is bound by residues Asn167, 193-196 (NSGV), and 216-218 (RDR). N6-acetyllysine; alternate occurs at positions 252 and 267. Lys252 and Lys267 each carry N6-succinyllysine; alternate. NADP(+) is bound by residues 285-288 (YGGM) and 310-312 (FWL). Lys316 carries the post-translational modification N6-succinyllysine. Lys368 contributes to the NADP(+) binding site.

It belongs to the zinc-containing alcohol dehydrogenase family. Quinone oxidoreductase subfamily. As to quaternary structure, homodimer. As to expression, expressed in Purkinje cells (at protein level).

It localises to the mitochondrion. The enzyme catalyses a 2,3-saturated acyl-[ACP] + NADP(+) = a (2E)-enoyl-[ACP] + NADPH + H(+). It catalyses the reaction (2E)-butenoyl-[ACP] + NADPH + H(+) = butanoyl-[ACP] + NADP(+). The catalysed reaction is (2E)-hexenoyl-[ACP] + NADPH + H(+) = hexanoyl-[ACP] + NADP(+). It carries out the reaction (2E)-octenoyl-[ACP] + NADPH + H(+) = octanoyl-[ACP] + NADP(+). The enzyme catalyses (2E)-decenoyl-[ACP] + NADPH + H(+) = decanoyl-[ACP] + NADP(+). It catalyses the reaction (2E)-dodecenoyl-[ACP] + NADPH + H(+) = dodecanoyl-[ACP] + NADP(+). The catalysed reaction is (2E)-tetradecenoyl-[ACP] + NADPH + H(+) = tetradecanoyl-[ACP] + NADP(+). It carries out the reaction (2E)-hexadecenoyl-[ACP] + NADPH + H(+) = hexadecanoyl-[ACP] + NADP(+). Catalyzes the NADPH-dependent reduction of trans-2-enoyl thioesters in mitochondrial fatty acid synthesis (fatty acid synthesis type II). Fatty acid chain elongation in mitochondria uses acyl carrier protein (ACP) as an acyl group carrier, but the enzyme accepts both ACP and CoA thioesters as substrates in vitro. Displays a preference for medium-chain over short- and long-chain substrates. May provide the octanoyl chain used for lipoic acid biosynthesis, regulating protein lipoylation and mitochondrial respiratory activity particularly in Purkinje cells. Involved in iron homeostasis; affecting Fe-S cluster assembly and ceramide metabolism. Required for proper morphology and bioenergetic functions of mitochondria. Required for maintenance of neurons. In Mus musculus (Mouse), this protein is Enoyl-[acyl-carrier-protein] reductase, mitochondrial (Mecr).